A 247-amino-acid polypeptide reads, in one-letter code: 2,3-bisphosphoglycerate-dependent phosphoglycerate mutase (247 aa).

Substrate contacts are provided by residues 8–15 (RHGESVWN), 21–22 (TG), Arg60, 87–90 (ERHY), Lys98, 114–115 (RR), and 183–184 (GN). His9 functions as the Tele-phosphohistidine intermediate in the catalytic mechanism. Glu87 (proton donor/acceptor) is an active-site residue.

The protein belongs to the phosphoglycerate mutase family. BPG-dependent PGAM subfamily. In terms of assembly, homodimer.

The enzyme catalyses (2R)-2-phosphoglycerate = (2R)-3-phosphoglycerate. It participates in carbohydrate degradation; glycolysis; pyruvate from D-glyceraldehyde 3-phosphate: step 3/5. Its function is as follows. Catalyzes the interconversion of 2-phosphoglycerate and 3-phosphoglycerate. In Geobacter sulfurreducens (strain ATCC 51573 / DSM 12127 / PCA), this protein is 2,3-bisphosphoglycerate-dependent phosphoglycerate mutase.